A 379-amino-acid chain; its full sequence is Cell division protein FtsZ (379 aa).

Residues 18–22 (GGGVN), 105–107 (GTG), glutamate 136, arginine 140, and aspartate 184 contribute to the GTP site.

Belongs to the FtsZ family. As to quaternary structure, homodimer. Polymerizes to form a dynamic ring structure in a strictly GTP-dependent manner. Interacts directly with several other division proteins.

It localises to the cytoplasm. Essential cell division protein that forms a contractile ring structure (Z ring) at the future cell division site. The regulation of the ring assembly controls the timing and the location of cell division. One of the functions of the FtsZ ring is to recruit other cell division proteins to the septum to produce a new cell wall between the dividing cells. Binds GTP and shows GTPase activity. The sequence is that of Cell division protein FtsZ from Mycobacterium bovis (strain ATCC BAA-935 / AF2122/97).